The chain runs to 216 residues: Thiamine-phosphate synthase (216 aa).

4-amino-2-methyl-5-(diphosphooxymethyl)pyrimidine contacts are provided by residues 37–41 (QVRSK) and D68. D69 and D93 together coordinate Mg(2+). T112 contributes to the 4-amino-2-methyl-5-(diphosphooxymethyl)pyrimidine binding site. 140 to 142 (TPT) serves as a coordination point for 2-[(2R,5Z)-2-carboxy-4-methylthiazol-5(2H)-ylidene]ethyl phosphate. K143 serves as a coordination point for 4-amino-2-methyl-5-(diphosphooxymethyl)pyrimidine.

The protein belongs to the thiamine-phosphate synthase family. Mg(2+) is required as a cofactor.

It catalyses the reaction 2-[(2R,5Z)-2-carboxy-4-methylthiazol-5(2H)-ylidene]ethyl phosphate + 4-amino-2-methyl-5-(diphosphooxymethyl)pyrimidine + 2 H(+) = thiamine phosphate + CO2 + diphosphate. The catalysed reaction is 2-(2-carboxy-4-methylthiazol-5-yl)ethyl phosphate + 4-amino-2-methyl-5-(diphosphooxymethyl)pyrimidine + 2 H(+) = thiamine phosphate + CO2 + diphosphate. The enzyme catalyses 4-methyl-5-(2-phosphooxyethyl)-thiazole + 4-amino-2-methyl-5-(diphosphooxymethyl)pyrimidine + H(+) = thiamine phosphate + diphosphate. The protein operates within cofactor biosynthesis; thiamine diphosphate biosynthesis; thiamine phosphate from 4-amino-2-methyl-5-diphosphomethylpyrimidine and 4-methyl-5-(2-phosphoethyl)-thiazole: step 1/1. Condenses 4-methyl-5-(beta-hydroxyethyl)thiazole monophosphate (THZ-P) and 2-methyl-4-amino-5-hydroxymethyl pyrimidine pyrophosphate (HMP-PP) to form thiamine monophosphate (TMP). The chain is Thiamine-phosphate synthase from Corynebacterium efficiens (strain DSM 44549 / YS-314 / AJ 12310 / JCM 11189 / NBRC 100395).